The following is a 338-amino-acid chain: Ketol-acid reductoisomerase (NADP(+)) (338 aa).

One can recognise a KARI N-terminal Rossmann domain in the interval 1–181 (MKVFYDKDCD…GGGKAGIIET (181 aa)). NADP(+) contacts are provided by residues 24–27 (YGSQ), R47, and S52. H107 is a catalytic residue. An NADP(+)-binding site is contributed by G133. The 146-residue stretch at 182-327 (NFKEETETDL…AQLRAMMPWI (146 aa)) folds into the KARI C-terminal knotted domain. Positions 190, 194, 226, and 230 each coordinate Mg(2+). S251 is a binding site for substrate.

This sequence belongs to the ketol-acid reductoisomerase family. Mg(2+) serves as cofactor.

The catalysed reaction is (2R)-2,3-dihydroxy-3-methylbutanoate + NADP(+) = (2S)-2-acetolactate + NADPH + H(+). It carries out the reaction (2R,3R)-2,3-dihydroxy-3-methylpentanoate + NADP(+) = (S)-2-ethyl-2-hydroxy-3-oxobutanoate + NADPH + H(+). It participates in amino-acid biosynthesis; L-isoleucine biosynthesis; L-isoleucine from 2-oxobutanoate: step 2/4. Its pathway is amino-acid biosynthesis; L-valine biosynthesis; L-valine from pyruvate: step 2/4. Its function is as follows. Involved in the biosynthesis of branched-chain amino acids (BCAA). Catalyzes an alkyl-migration followed by a ketol-acid reduction of (S)-2-acetolactate (S2AL) to yield (R)-2,3-dihydroxy-isovalerate. In the isomerase reaction, S2AL is rearranged via a Mg-dependent methyl migration to produce 3-hydroxy-3-methyl-2-ketobutyrate (HMKB). In the reductase reaction, this 2-ketoacid undergoes a metal-dependent reduction by NADPH to yield (R)-2,3-dihydroxy-isovalerate. In Paracidovorax citrulli (strain AAC00-1) (Acidovorax citrulli), this protein is Ketol-acid reductoisomerase (NADP(+)).